A 242-amino-acid chain; its full sequence is MEPKYQRILIKLSGEALAGDKGVGIDIPTVQSIAKEIAEVHNSGVQIALVIGGGNLWRGEPAAEAGMDRVQADYTGMLGTVMNALVMADSLQQYGVDTRVQTAIPMQTVAEPYVRGRALRHLEKDRIVVFGAGIGSPYFSTDTTAALRAAEIEAEAILMAKNGVDGVYNADPKKDANAVKFDELTHVEVIKRGLKIMDATASTISMDNDIDLVVFNMNETGNIKRVVLGEQIGTTVSNKASE.

An ATP-binding site is contributed by 11–14 (KLSG). The involved in allosteric activation by GTP stretch occupies residues 19-24 (GDKGVG). G53 provides a ligand contact to UMP. 2 residues coordinate ATP: G54 and R58. UMP contacts are provided by residues D73 and 134 to 141 (IGSPYFST). ATP-binding residues include N162, Y168, and D171.

The protein belongs to the UMP kinase family. As to quaternary structure, homohexamer.

The protein localises to the cytoplasm. It carries out the reaction UMP + ATP = UDP + ADP. It functions in the pathway pyrimidine metabolism; CTP biosynthesis via de novo pathway; UDP from UMP (UMPK route): step 1/1. Its activity is regulated as follows. Allosterically activated by GTP. Inhibited by UTP. Catalyzes the reversible phosphorylation of UMP to UDP. The sequence is that of Uridylate kinase from Streptococcus agalactiae serotype III (strain NEM316).